Reading from the N-terminus, the 194-residue chain is BCL2/adenovirus E1B 19 kDa protein-interacting protein 3 (194 aa).

The interval 1–102 is disordered; sequence MSQNGAPGMQ…SQSEEDDIER (102 aa). The segment covering 42-55 has biased composition (basic and acidic residues); it reads DMEKILLDAQHESG. Phosphoserine occurs at positions 54, 66, 86, 92, and 95. Over residues 56 to 69 the composition is skewed to low complexity; it reads RSSSKSSHCDSPPR. Over residues 78 to 88 the composition is skewed to basic and acidic residues; that stretch reads RASETDTHSIG. Residues 100-125 carry the BH3 motif; that stretch reads IERRKEVESILKKNSDWIWDWSSRPE. A helical membrane pass occupies residues 164-184; sequence VFLPSLLLSHLLAIGLGIYIG.

The protein belongs to the NIP3 family. In terms of assembly, homodimer. Binds to BCL2. Interacts with BNIP3L and ACAA2. Interacts (via BH3 domain) with SPATA18 (via coiled-coil domains). Interacts with BOK; promotes BOK oligomerization. Interacts with PPTC7; this interaction promotes BNIP3 degradation. As to quaternary structure, (Microbial infection) Interacts with adenovirus E1B 19 kDa protein. (Microbial infection) Interacts with Epstein-Barr virus BHRF1.

The protein localises to the mitochondrion. The protein resides in the mitochondrion outer membrane. Functionally, apoptosis-inducing protein that can overcome BCL2 suppression. May play a role in repartitioning calcium between the two major intracellular calcium stores in association with BCL2. Involved in mitochondrial quality control via its interaction with SPATA18/MIEAP: in response to mitochondrial damage, participates in mitochondrial protein catabolic process (also named MALM) leading to the degradation of damaged proteins inside mitochondria. The physical interaction of SPATA18/MIEAP, BNIP3 and BNIP3L/NIX at the mitochondrial outer membrane regulates the opening of a pore in the mitochondrial double membrane in order to mediate the translocation of lysosomal proteins from the cytoplasm to the mitochondrial matrix. Plays an important role in the calprotectin (S100A8/A9)-induced cell death pathway. The polypeptide is BCL2/adenovirus E1B 19 kDa protein-interacting protein 3 (Homo sapiens (Human)).